The following is a 217-amino-acid chain: Thiopurine S-methyltransferase (217 aa).

The S-adenosyl-L-methionine site is built by Trp11, Leu46, Glu67, and Arg122.

It belongs to the class I-like SAM-binding methyltransferase superfamily. TPMT family.

It localises to the cytoplasm. It catalyses the reaction S-adenosyl-L-methionine + a thiopurine = S-adenosyl-L-homocysteine + a thiopurine S-methylether.. This Vibrio atlanticus (strain LGP32) (Vibrio splendidus (strain Mel32)) protein is Thiopurine S-methyltransferase.